Reading from the N-terminus, the 345-residue chain is Protein CHROMOSOME TRANSMISSION FIDELITY 7 (345 aa).

Residues 96-120 form a CCHH-type zinc finger; the sequence is RHCAECGAKYAPGDELDEKNHQSFH.

It belongs to the acetyltransferase family. ECO subfamily. Autoacetylated. In terms of tissue distribution, expressed in roots, stems, leaves, young seedlings and flower buds. Detected in the embryo, but not in the endosperm.

The protein localises to the nucleus. Its subcellular location is the cytoplasm. Its function is as follows. Acetyltransferase required for the establishment of sister chromatid cohesion. Involved in preservation of genome integrity and meiosis. Required for DNA repair and for the regulation of chromosome segregation during mitotic cell division. Knock-down mutants are extremely dwarf. Regulator of sister chromatid cohesion in meiosis which negatively regulates cohesin association with chromatin, acting as an antagonist of WAPL1 and WAPL2. This is Protein CHROMOSOME TRANSMISSION FIDELITY 7 from Arabidopsis thaliana (Mouse-ear cress).